Here is a 266-residue protein sequence, read N- to C-terminus: uncharacterized protein (266 aa).

This is an uncharacterized protein from Methanocaldococcus jannaschii (strain ATCC 43067 / DSM 2661 / JAL-1 / JCM 10045 / NBRC 100440) (Methanococcus jannaschii).